A 244-amino-acid chain; its full sequence is Protein crossbronx (244 aa).

One can recognise a UBC core domain in the interval 20-176 (QQEYKILAEY…VLENIKESKE (157 aa)).

This sequence belongs to the ubiquitin-conjugating enzyme family. FTS subfamily.

The chain is Protein crossbronx (cbx) from Drosophila persimilis (Fruit fly).